A 604-amino-acid polypeptide reads, in one-letter code: NADH-ubiquinone oxidoreductase chain 5 (604 aa).

16 helical membrane-spanning segments follow: residues 2 to 22 (FSSLMLVSLLVLTLPIMLSIF), 41 to 61 (AFITSLIPTMMFIHSGQETII), 85 to 105 (MIFVPVALFVTWSIMEFSLWY), 115 to 135 (FFKYLLTFLITMMILVTANNL), 138 to 158 (LFIGWEGVGIMSFLLIGWWYG), 169 to 189 (AILYNRIGDIGFIMAMAWFLF), 209 to 231 (LPLLGLLLAATGKSAQFGLHPWL), 239 to 259 (TPVSALLHSSTMVVAGVFLLI), 271 to 291 (IQSLTLCLGAITTLFTAICAL), 299 to 318 (IIAFSTSSQLGLMIVTIGIN), 323 to 345 (AFLHICTHAFFKAMLFMCSGSII), 364 to 384 (MPFTTTSLIIGSLALTGIPFL), 411 to 431 (LIATSLTAVYSTRIIFFALLG), 455 to 475 (LLIGSIFAGFFISNNIYPTTV), 486 to 506 (LTALAVTILGFTLALELSLMT), and 582 to 602 (IKLYFLSFLITLTLSMLLFNL).

Belongs to the complex I subunit 5 family. Core subunit of respiratory chain NADH dehydrogenase (Complex I) which is composed of 45 different subunits.

It is found in the mitochondrion inner membrane. It carries out the reaction a ubiquinone + NADH + 5 H(+)(in) = a ubiquinol + NAD(+) + 4 H(+)(out). Functionally, core subunit of the mitochondrial membrane respiratory chain NADH dehydrogenase (Complex I) which catalyzes electron transfer from NADH through the respiratory chain, using ubiquinone as an electron acceptor. Essential for the catalytic activity and assembly of complex I. The protein is NADH-ubiquinone oxidoreductase chain 5 (MT-ND5) of Equus caballus (Horse).